A 62-amino-acid chain; its full sequence is Conotoxin Tx5.1 (62 aa).

The N-terminal stretch at 1–22 (MCCLPVFVILLLLIASAPSVDA) is a signal peptide. Positions 23 to 49 (QPKTKDDVPLAPLHDNAKSALQHLNQR) are excised as a propeptide. The residue at position 60 (Gln60) is a Glutamine amide.

Belongs to the conotoxin T superfamily. In terms of processing, contains 2 disulfide bonds that can be either 'C1-C3, C2-C4' or 'C1-C4, C2-C3', since these disulfide connectivities have been observed for conotoxins with cysteine framework V (for examples, see AC P0DQQ7 and AC P81755). Expressed by the venom duct.

It is found in the secreted. This Conus textile (Cloth-of-gold cone) protein is Conotoxin Tx5.1.